An 851-amino-acid chain; its full sequence is UPF0508 protein CAGL0M08074g (851 aa).

The protein belongs to the UPF0508 family.

The sequence is that of UPF0508 protein CAGL0M08074g from Candida glabrata (strain ATCC 2001 / BCRC 20586 / JCM 3761 / NBRC 0622 / NRRL Y-65 / CBS 138) (Yeast).